Consider the following 162-residue polypeptide: Shikimate kinase (162 aa).

Residue 11-16 participates in ATP binding; sequence GSGKSS. Serine 15 contributes to the Mg(2+) binding site. Aspartate 33, arginine 57, and glycine 80 together coordinate substrate. Arginine 116 contacts ATP. A substrate-binding site is contributed by arginine 132.

It belongs to the shikimate kinase family. Monomer. The cofactor is Mg(2+).

Its subcellular location is the cytoplasm. The enzyme catalyses shikimate + ATP = 3-phosphoshikimate + ADP + H(+). It functions in the pathway metabolic intermediate biosynthesis; chorismate biosynthesis; chorismate from D-erythrose 4-phosphate and phosphoenolpyruvate: step 5/7. Catalyzes the specific phosphorylation of the 3-hydroxyl group of shikimic acid using ATP as a cosubstrate. The chain is Shikimate kinase from Helicobacter pylori (strain Shi470).